The sequence spans 154 residues: Deoxyuridine 5'-triphosphate nucleotidohydrolase (154 aa).

Substrate is bound by residues 64–66 (RSG), Asn77, 81–83 (TVD), and Lys91.

The protein belongs to the dUTPase family. Homotrimer. It depends on Mg(2+) as a cofactor.

The catalysed reaction is dUTP + H2O = dUMP + diphosphate + H(+). It participates in pyrimidine metabolism; dUMP biosynthesis; dUMP from dCTP (dUTP route): step 2/2. Functionally, this enzyme is involved in nucleotide metabolism: it produces dUMP, the immediate precursor of thymidine nucleotides and it decreases the intracellular concentration of dUTP so that uracil cannot be incorporated into DNA. This chain is Deoxyuridine 5'-triphosphate nucleotidohydrolase, found in Mycolicibacterium gilvum (strain PYR-GCK) (Mycobacterium gilvum (strain PYR-GCK)).